A 488-amino-acid polypeptide reads, in one-letter code: Protein nucleotidyltransferase YdiU (488 aa).

8 residues coordinate ATP: glycine 91, glycine 93, arginine 94, lysine 114, aspartate 126, glycine 127, arginine 177, and arginine 184. The Proton acceptor role is filled by aspartate 253. Residues asparagine 254 and aspartate 263 each coordinate Mg(2+). Aspartate 263 contributes to the ATP binding site.

Belongs to the SELO family. Requires Mg(2+) as cofactor. Mn(2+) is required as a cofactor.

It carries out the reaction L-seryl-[protein] + ATP = 3-O-(5'-adenylyl)-L-seryl-[protein] + diphosphate. The enzyme catalyses L-threonyl-[protein] + ATP = 3-O-(5'-adenylyl)-L-threonyl-[protein] + diphosphate. The catalysed reaction is L-tyrosyl-[protein] + ATP = O-(5'-adenylyl)-L-tyrosyl-[protein] + diphosphate. It catalyses the reaction L-histidyl-[protein] + UTP = N(tele)-(5'-uridylyl)-L-histidyl-[protein] + diphosphate. It carries out the reaction L-seryl-[protein] + UTP = O-(5'-uridylyl)-L-seryl-[protein] + diphosphate. The enzyme catalyses L-tyrosyl-[protein] + UTP = O-(5'-uridylyl)-L-tyrosyl-[protein] + diphosphate. Its function is as follows. Nucleotidyltransferase involved in the post-translational modification of proteins. It can catalyze the addition of adenosine monophosphate (AMP) or uridine monophosphate (UMP) to a protein, resulting in modifications known as AMPylation and UMPylation. This chain is Protein nucleotidyltransferase YdiU, found in Bacillus mycoides (strain KBAB4) (Bacillus weihenstephanensis).